Reading from the N-terminus, the 187-residue chain is LSM complex subunit LSM4 (187 aa).

A Sm domain is found at 2–85 (LPLYLLTNAK…IKFIKLQDNI (84 aa)). The disordered stretch occupies residues 93–187 (INSNNNSNSN…NSSSPQKVEF (95 aa)). Residues 112-167 (NRDSNNNRGNYNRRNNNNGNSNRRPYSQNRQYNNSNSSNINNSINSINSNNQNMNN) show a composition bias toward low complexity. An Omega-N-methylarginine modification is found at Arg119. Positions 175–187 (HHFNSSSPQKVEF) are enriched in polar residues. Ser181 bears the Phosphoserine mark.

It belongs to the snRNP Sm proteins family. As to quaternary structure, component of the heptameric LSM1-LSM7 complex that forms a seven-membered ring structure with a donut shape. The LSm subunits are arranged in the order LSM1, LSM2, LSM3, LSM6, LSM5, LSM7 and LSM4. Except for LSM1, where a C-terminal helix crosses the ring structure to form additional interactions with LSM3 and LSM6, each subunit interacts only with its two neighboring subunits. The LSM1-LSM7 complex interacts with PAT1; within the complex PAT1 has direct interactions with LSM2 and LSM3. The LSM1-LSM7 complex interacts with XRN1. Component of the heptameric LSM2-LSM8 complex that forms a seven-membered ring structure with a donut shape; an RNA strand can pass through the hole in the center of the ring structure. The LSm subunits are arranged in the order LSM8, LSM2, LSM3, LSM6, LSM5, LSM7 and LSM4. Component of the spliceosome U4/U6-U5 tri-snRNP complex composed of the U4, U6 and U5 snRNAs and at least PRP3, PRP4, PRP6, PRP8, PRP18, PRP31, PRP38, SNU13, SNU23, SNU66, SNU114, SPP381, SMB1, SMD1, SMD2, SMD3, SMX2, SMX3, LSM2, LSM3, LSM4, LSM5, LSM6, LSM7, LSM8, BRR2 and DIB1. May be found in a complex comprising LSM2-LSM7 without LSM1 or LSM8; the complex associates with pre-P RNA and snoRNA SNR5.

Its subcellular location is the nucleus. It localises to the cytoplasm. Its function is as follows. Component of LSm protein complexes, which are involved in RNA processing and may function in a chaperone-like manner. Component of the cytoplasmic LSM1-LSM7 complex which is involved in mRNA degradation by activating the decapping step. Together with PAT1, the LSM1-LSM7 complex binds to osmotic stress-activated mRNAs to attenuate the osmotic stress response, probably by limiting ribosome access to the mRNA and consequently translation. Component of the nuclear LSM2-LSM8 complex, which is involved in spliceosome assembly. The LSM2-LSM8 complex plays a role in the biogenesis of the spliceosomal U4/U6-U5 tri-snRNP complex by accelerating PRP24-mediated annealing of U4/U6 di-snRNA. The LSM2-LSM8 complex binds U6 snRNA terminating with a non-cyclic 3' phosphate group. LSM2-LSM8 is probably also involved in degradation of nuclear pre-mRNA by targeting them for decapping. LSM2-LSM8 could be involved in processing of pre-tRNAs, pre-rRNAs and U3 snoRNA, although involvement may be indirect. In a complex that probably contains LSM2-LSM7, but not LSM1 or LSM8, associates with the precursor of the RNA component of RNase P (pre-P RNA) and may be involved in maturing pre-P RNA; the complex also associates with snoRNA SNR5. This chain is LSM complex subunit LSM4, found in Saccharomyces cerevisiae (strain ATCC 204508 / S288c) (Baker's yeast).